We begin with the raw amino-acid sequence, 293 residues long: Beta-porphyranase B (293 aa).

Residues 1–21 form the signal peptide; it reads MKLSNQFLITITLLITSITFA. Positions 38–291 constitute a GH16 domain; that stretch reads QEWKLIENMS…WVRSWQLVDS (254 aa). Residues W67, R70, E156, E161, and E256 each contribute to the substrate site. Catalysis depends on E156, which acts as the Nucleophile. The Proton donor role is filled by E161.

The protein belongs to the glycosyl hydrolase 16 family.

The protein resides in the periplasm. It carries out the reaction Hydrolysis of beta-D-galactopyranose-(1-&gt;4)-alpha-L-galactopyranose-6-sulfate linkages in porphyran.. Functionally, cleaves the sulfated polysaccharide porphyran at the (1-&gt;4) linkages between beta-D-galactopyranose and alpha-L-galactopyranose-6-sulfate, forming mostly the disaccharide alpha-L-galactopyranose-6-sulfate-(1-&gt;3)-beta-D-galactose. Some longer oligosaccharides of even number of residues are also observed. Inactive on the non-sulfated agarose portion of the porphyran backbone. In contrast to PorA, tolerates the presence of 3-6-anhydro-L-galactose in subsite -2. The sequence is that of Beta-porphyranase B (porB) from Zobellia galactanivorans (strain DSM 12802 / CCUG 47099 / CIP 106680 / NCIMB 13871 / Dsij).